Here is a 170-residue protein sequence, read N- to C-terminus: Bifunctional protein PyrR (170 aa).

Residues 90–102 carry the PRPP-binding motif; that stretch reads LVLIDDVLMSGRT.

The protein belongs to the purine/pyrimidine phosphoribosyltransferase family. PyrR subfamily.

The catalysed reaction is UMP + diphosphate = 5-phospho-alpha-D-ribose 1-diphosphate + uracil. Its function is as follows. Regulates the transcription of the pyrimidine nucleotide (pyr) operon in response to exogenous pyrimidines. Functionally, also displays a weak uracil phosphoribosyltransferase activity which is not physiologically significant. This is Bifunctional protein PyrR from Pseudomonas savastanoi pv. phaseolicola (strain 1448A / Race 6) (Pseudomonas syringae pv. phaseolicola (strain 1448A / Race 6)).